The following is a 441-amino-acid chain: Tol-Pal system protein TolB (441 aa).

A signal peptide spans 1–25; that stretch reads MRIFFFAYVLPTVISLLLGCQGAIA.

Belongs to the TolB family. As to quaternary structure, the Tol-Pal system is composed of five core proteins: the inner membrane proteins TolA, TolQ and TolR, the periplasmic protein TolB and the outer membrane protein Pal. They form a network linking the inner and outer membranes and the peptidoglycan layer.

Its subcellular location is the periplasm. Part of the Tol-Pal system, which plays a role in outer membrane invagination during cell division and is important for maintaining outer membrane integrity. The polypeptide is Tol-Pal system protein TolB (Anaplasma marginale (strain St. Maries)).